The sequence spans 5084 residues: Apicidin F synthase (5084 aa).

Residues 209–606 (ARILQRQPDK…VGRLDSQVKL (398 aa)) are adenylation 1. A Carrier 1 domain is found at 731–808 (HETDNCQRLL…EAASSMREVV (78 aa)). O-(pantetheine 4'-phosphoryl)serine is present on S768. 2 condensation regions span residues 822-1124 (YPLS…FPIY) and 1309-1609 (EIYC…SILV). The segment at 1788–2192 (EDPTREAVFS…IGRKDNQIKI (405 aa)) is adenylation 2. One can recognise a Carrier 2 domain in the interval 2341–2415 (VVKDDPVSEL…DMAKGMAPLS (75 aa)). Residue S2376 is modified to O-(pantetheine 4'-phosphoryl)serine. The tract at residues 2415-2441 (SLTAPESTSSSSPQSFSTSTSTTIIEN) is disordered. The span at 2421-2437 (STSSSSPQSFSTSTSTT) shows a compositional bias: low complexity. Residues 2478–2755 (EDIFPCTPMQ…IVTLPRQLNI (278 aa)) are condensation 3. An adenylation 3 region spans residues 2935–3328 (RNNPRARAVV…GRRDGQIKLR (394 aa)). The Carrier 3 domain occupies 3463–3539 (ETWSSSEAIV…DMASRLSRPE (77 aa)). S3500 carries the O-(pantetheine 4'-phosphoryl)serine modification. A condensation 4 region spans residues 3581 to 3866 (EDIYPCTPLQ…IATVPSRTTI (286 aa)). Residues 4029 to 4426 (RKQVELSPSH…TVSWIGRKDH (398 aa)) are adenylation 4. The Carrier 4 domain occupies 4554 to 4631 (ALKTPKERLL…DMADLLGPLR (78 aa)). S4592 carries the post-translational modification O-(pantetheine 4'-phosphoryl)serine. The segment at 4669-4948 (EQIYPCTAYQ…ISKLPLRIQL (280 aa)) is condensation 5.

It belongs to the NRP synthetase family.

Its pathway is secondary metabolite biosynthesis. Its function is as follows. Non-ribosomal peptide synthetase; part of the gene cluster that mediates the biosynthesis of the cyclic tetrapeptide apicidin F (APF). The non-ribosomal peptide synthetase apf1 incorporates four different amino acids to produce apicidin F: L-phenylalanine, D-pipecolic acid (D-pip), N-methoxy-L-tryptophan and L-2-aminooctanedioic acid. L-Phenylalanine is the only proteinogenic amino acid directly used by apf1. The 3 other apf1 substrates are non-proteinogenic and have to be modified by other enzymes of the cluster. Lysine is converted to delta-1-pyrroline-5-carboxylate (P5C) which is reduced to L-pipecolic acid (L-pip) by apf3. L-pip is epimerized to D-pip, probably by apf1 activity, prior to incorporation. L-Tryptophan is N-oxidyzed by one of the cytochrome P450 monooxygenases (apf7 or apf8), and further methylated at the hydroxy group by the O-methyltransferase apf6 to yield N-methoxy-L-tryptophan. The synthesis of the fourth apf1 substrate is more complex. The fatty acid synthase apf5 is involved in the synthesis of the octanoic acid backbone of L-2-aminooctanedioic acid by fixing one acetyl-CoA unit and three malonyl-CoA units. Then one of the cytochrome P450 monooxygenases (apf7 or apf8) may oxidize this backbone to 2-oxooctanoic acid. The aminotransferase apf4 is predicted to catalyze the exchange of the keto group with an amino group. The next step would be the oxidation of 2-aminooctanoic acid by one of the cytochrome P450 monooxygenases (apf7 or apf8). The last step is the oxidation of 2-amino-8-hydroxyoctanoic acid to 2-aminooctanedioic acid is catalyzed by the FAD-dependent monooxygenase apf9. The chain is Apicidin F synthase from Gibberella fujikuroi (strain CBS 195.34 / IMI 58289 / NRRL A-6831) (Bakanae and foot rot disease fungus).